The sequence spans 265 residues: SPbeta prophage-derived uncharacterized protein YomU (265 aa).

A disordered region spans residues 238–265; that stretch reads KADGTKGVVTSDEGTGSSQSSDLGGTTE. Residues 249–265 are compositionally biased toward polar residues; the sequence is DEGTGSSQSSDLGGTTE.

This Bacillus subtilis (strain 168) protein is SPbeta prophage-derived uncharacterized protein YomU (yomU).